The primary structure comprises 615 residues: Proteasome-associated ATPase (615 aa).

The interval 1 to 27 (MSESERSEASEVFGTSPDSRLSSEDAA) is disordered. Residues 22–99 (SSEDAAELEQ…LREEVDRLGQ (78 aa)) adopt a coiled-coil conformation. Position 302 to 307 (302 to 307 (GCGKTL)) interacts with ATP. Residues 614 to 615 (YL) are docks into pockets in the proteasome alpha-ring.

This sequence belongs to the AAA ATPase family. In terms of assembly, homohexamer. Assembles into a hexameric ring structure that caps the 20S proteasome core. Strongly interacts with the prokaryotic ubiquitin-like protein Pup through a hydrophobic interface; the interacting region of ARC lies in its N-terminal coiled-coil domain. There is one Pup binding site per ARC hexamer ring. Upon ATP-binding, the C-terminus of ARC interacts with the alpha-rings of the proteasome core, possibly by binding to the intersubunit pockets.

Its pathway is protein degradation; proteasomal Pup-dependent pathway. Its function is as follows. ATPase which is responsible for recognizing, binding, unfolding and translocation of pupylated proteins into the bacterial 20S proteasome core particle. May be essential for opening the gate of the 20S proteasome via an interaction with its C-terminus, thereby allowing substrate entry and access to the site of proteolysis. Thus, the C-termini of the proteasomal ATPase may function like a 'key in a lock' to induce gate opening and therefore regulate proteolysis. The polypeptide is Proteasome-associated ATPase (Mycolicibacterium vanbaalenii (strain DSM 7251 / JCM 13017 / BCRC 16820 / KCTC 9966 / NRRL B-24157 / PYR-1) (Mycobacterium vanbaalenii)).